The primary structure comprises 297 residues: Phosphatidylglycerol--prolipoprotein diacylglyceryl transferase (297 aa).

Helical transmembrane passes span 20-40 (FITIRWYGLLISVSVLIGLFV), 57-77 (EILPSLIISSILGARAYYVIF), 105-125 (AVWEGGIAIHGGLIGGLISII), and 133-153 (INLKTFIDILIPSIILGQSIG). Position 154 (arginine 154) interacts with a 1,2-diacyl-sn-glycero-3-phospho-(1'-sn-glycerol). The next 3 helical transmembrane spans lie at 193–213 (PTFLYESLWNLLIFIALIIIF), 225–245 (GFISFLYLISYSFGRFWIEGL), and 266–286 (AQFISIFLFSSGLIGIFFLRL).

This sequence belongs to the Lgt family.

Its subcellular location is the cell inner membrane. It carries out the reaction L-cysteinyl-[prolipoprotein] + a 1,2-diacyl-sn-glycero-3-phospho-(1'-sn-glycerol) = an S-1,2-diacyl-sn-glyceryl-L-cysteinyl-[prolipoprotein] + sn-glycerol 1-phosphate + H(+). The protein operates within protein modification; lipoprotein biosynthesis (diacylglyceryl transfer). Catalyzes the transfer of the diacylglyceryl group from phosphatidylglycerol to the sulfhydryl group of the N-terminal cysteine of a prolipoprotein, the first step in the formation of mature lipoproteins. The protein is Phosphatidylglycerol--prolipoprotein diacylglyceryl transferase of Prochlorococcus marinus (strain MIT 9215).